Here is a 321-residue protein sequence, read N- to C-terminus: F420-non-reducing hydrogenase iron-sulfur subunit G (321 aa).

The protein belongs to the [NiFe]/[NiFeSe] hydrogenase small subunit family. The F420-non-reducing hydrogenase is composed of three subunits; MvhA, MvhD and MvhG. It forms a complex with the heterodisulfide reductase (Hdr).

The protein localises to the cytoplasm. Part of a complex that provides reducing equivalents for heterodisulfide reductase. The polypeptide is F420-non-reducing hydrogenase iron-sulfur subunit G (mvhG) (Archaeoglobus profundus (strain DSM 5631 / JCM 9629 / NBRC 100127 / Av18)).